Here is a 309-residue protein sequence, read N- to C-terminus: Glycine-rich RNA-binding protein 3, mitochondrial (309 aa).

A mitochondrion-targeting transit peptide spans 1 to 37; the sequence is MAFLSKFGNILKQTTNKQLNAQVSLSSPSLFQAIRCM. An RRM domain is found at 40-118; sequence SKLFIGGMAY…RVVKVNYAND (79 aa). The interval 247 to 309 is disordered; sequence FAGDSQFGGS…GEFEDVAKRA (63 aa). Residues 258-273 show a composition bias toward polar residues; sequence VGNSSQFGGDNTQFTA.

Belongs to the GR-RBP family. Homodimer. Interacts with ORRM2 and MORF8/RIP1. Interacts with RBG5/ORRM4. Binds to RBG2/ORRM5.

Its subcellular location is the mitochondrion. Its function is as follows. Possibly has a role in RNA transcription or processing during stress. Involved in C-to-U editing of mitochondrial RNA. Functions as a minor mitochondrial editing factor. Controls 6 percent of the mitochondrial editing sites. This chain is Glycine-rich RNA-binding protein 3, mitochondrial, found in Arabidopsis thaliana (Mouse-ear cress).